The sequence spans 473 residues: MSFTVAIVGRPNVGKSTLFNRLVGKKLALVDDTPGVTRDRRPGDARLMGLTFTIIDTAGLEEADEESLQGRMRAQTEAAIDEADLSLFVVDAKNGLTPVDTALAEMLRRRGKPVVLVANKSEARGSDSGFYDAYTLGLGEPTPISAEHGQGMLDLRDAIVEAIGKDRAYAKEDVAVTDVDIPPSENEADGEDEEPAYDETKPLRVAIVGRPNAGKSTLINRFLGEDRLLTGPEAGITRDSISVEWDWRGRTIKMFDTAGMRRKARVTEKLEKLSVADALRAIRFAETVVIVFDATIPFEKQDLQIVDLVLREGRAAVLAFNKWDMIEDRQAVLADLREKTDRLLPQARGIRAVPISGQTGWGLDKLMQSIIDTDRVWNKRISTARLNRWLETQQIQHPPPAVSGRRIKLKYMTQVKARPPAFMISCTRSDALPESYTRYLINGLRADFDMPSVPIRIHFRSPDNPFESKKKRT.

EngA-type G domains are found at residues 3 to 167 and 203 to 378; these read FTVA…GKDR and LRVA…RVWN. GTP contacts are provided by residues 9-16, 56-60, 119-122, 209-216, 256-260, and 321-324; these read GRPNVGKS, DTAGL, NKSE, GRPNAGKS, DTAGM, and NKWD. Positions 379–463 constitute a KH-like domain; that stretch reads KRISTARLNR…PIRIHFRSPD (85 aa).

Belongs to the TRAFAC class TrmE-Era-EngA-EngB-Septin-like GTPase superfamily. EngA (Der) GTPase family. As to quaternary structure, associates with the 50S ribosomal subunit.

GTPase that plays an essential role in the late steps of ribosome biogenesis. This chain is GTPase Der, found in Rhizobium etli (strain ATCC 51251 / DSM 11541 / JCM 21823 / NBRC 15573 / CFN 42).